Consider the following 302-residue polypeptide: Sulfate adenylyltransferase subunit 2 (302 aa).

It belongs to the PAPS reductase family. CysD subfamily. In terms of assembly, heterodimer composed of CysD, the smaller subunit, and CysN.

The catalysed reaction is sulfate + ATP + H(+) = adenosine 5'-phosphosulfate + diphosphate. It participates in sulfur metabolism; hydrogen sulfide biosynthesis; sulfite from sulfate: step 1/3. In terms of biological role, with CysN forms the ATP sulfurylase (ATPS) that catalyzes the adenylation of sulfate producing adenosine 5'-phosphosulfate (APS) and diphosphate, the first enzymatic step in sulfur assimilation pathway. APS synthesis involves the formation of a high-energy phosphoric-sulfuric acid anhydride bond driven by GTP hydrolysis by CysN coupled to ATP hydrolysis by CysD. The chain is Sulfate adenylyltransferase subunit 2 from Yersinia enterocolitica serotype O:8 / biotype 1B (strain NCTC 13174 / 8081).